The chain runs to 487 residues: Probable peptidoglycan glycosyltransferase FtsW (487 aa).

The next 9 membrane-spanning stretches (helical) occupy residues 30–50, 71–91, 93–113, 122–142, 167–187, 203–223, 282–302, 332–352, and 358–378; these read VSLILLALSLMAIGLVIVTSA, IYIVLAIGAALTVMQIPMQWW, TSNAWLLLLGLVLLIAVLLVG, WLAIGPITIQAAEPAKLFFFC, VVFFAFAVLLLLQPDLGTVVV, LWQFFGLAFTGGAAVTFLIMF, FIMAILAEELGFAGVLTVLAL, IGIWFSFQTAVNVGASAGILP, and FPLLSYGGSSLIIMAAAVGLL. Disordered stretches follow at residues 398 to 419 and 444 to 487; these read KAKASTSSSRKNKPKTASSAGK and IDSI…DGYV. The segment covering 401–416 has biased composition (polar residues); sequence ASTSSSRKNKPKTASS. Acidic residues predominate over residues 444–453; sequence IDSIMDDFAQ.

Belongs to the SEDS family. FtsW subfamily.

It localises to the cell inner membrane. It carries out the reaction [GlcNAc-(1-&gt;4)-Mur2Ac(oyl-L-Ala-gamma-D-Glu-L-Lys-D-Ala-D-Ala)](n)-di-trans,octa-cis-undecaprenyl diphosphate + beta-D-GlcNAc-(1-&gt;4)-Mur2Ac(oyl-L-Ala-gamma-D-Glu-L-Lys-D-Ala-D-Ala)-di-trans,octa-cis-undecaprenyl diphosphate = [GlcNAc-(1-&gt;4)-Mur2Ac(oyl-L-Ala-gamma-D-Glu-L-Lys-D-Ala-D-Ala)](n+1)-di-trans,octa-cis-undecaprenyl diphosphate + di-trans,octa-cis-undecaprenyl diphosphate + H(+). It functions in the pathway cell wall biogenesis; peptidoglycan biosynthesis. Functionally, peptidoglycan polymerase that is essential for cell division. This chain is Probable peptidoglycan glycosyltransferase FtsW, found in Pseudoalteromonas atlantica (strain T6c / ATCC BAA-1087).